The following is a 944-amino-acid chain: LPS-assembly protein LptD (944 aa).

The first 33 residues, 1–33 (MALKSPAFRRKFPLLVTGGLLALQPLATSFVVA), serve as a signal peptide directing secretion. Residues 52-102 (KATGNLPPRPVHPGAAAASSGAEAPGEVGEAQAEKPMLVTESKGRGLKSRS) are disordered. A compositionally biased stretch (low complexity) spans 64 to 82 (PGAAAASSGAEAPGEVGEA).

The protein belongs to the LptD family. As to quaternary structure, component of the lipopolysaccharide transport and assembly complex. Interacts with LptE and LptA.

Its subcellular location is the cell outer membrane. Functionally, together with LptE, is involved in the assembly of lipopolysaccharide (LPS) at the surface of the outer membrane. This is LPS-assembly protein LptD from Pseudomonas entomophila (strain L48).